Consider the following 642-residue polypeptide: 1-deoxy-D-xylulose-5-phosphate synthase 2 (642 aa).

Thiamine diphosphate is bound by residues His73 and 113–115 (SHA). Asp144 contacts Mg(2+). Thiamine diphosphate is bound by residues 145 to 146 (GA), Asn174, Tyr285, and Glu366. A Mg(2+)-binding site is contributed by Asn174.

Belongs to the transketolase family. DXPS subfamily. As to quaternary structure, homodimer. Requires Mg(2+) as cofactor. Thiamine diphosphate serves as cofactor.

It catalyses the reaction D-glyceraldehyde 3-phosphate + pyruvate + H(+) = 1-deoxy-D-xylulose 5-phosphate + CO2. It participates in metabolic intermediate biosynthesis; 1-deoxy-D-xylulose 5-phosphate biosynthesis; 1-deoxy-D-xylulose 5-phosphate from D-glyceraldehyde 3-phosphate and pyruvate: step 1/1. Catalyzes the acyloin condensation reaction between C atoms 2 and 3 of pyruvate and glyceraldehyde 3-phosphate to yield 1-deoxy-D-xylulose-5-phosphate (DXP). This Streptomyces avermitilis (strain ATCC 31267 / DSM 46492 / JCM 5070 / NBRC 14893 / NCIMB 12804 / NRRL 8165 / MA-4680) protein is 1-deoxy-D-xylulose-5-phosphate synthase 2.